We begin with the raw amino-acid sequence, 145 residues long: uncharacterized protein (145 aa).

An N-acetylmethionine modification is found at methionine 1. Positions glutamine 15–proline 41 are disordered. Residues leucine 16 to arginine 27 show a composition bias toward polar residues. 2 positions are modified to phosphoserine: serine 121 and serine 126. The disordered stretch occupies residues asparagine 125–aspartate 145. A compositionally biased stretch (acidic residues) spans aspartate 135–aspartate 145.

This sequence belongs to the PDCD5 family.

This is an uncharacterized protein from Saccharomyces cerevisiae (strain ATCC 204508 / S288c) (Baker's yeast).